Consider the following 101-residue polypeptide: Small ribosomal subunit protein uS14 (101 aa).

This sequence belongs to the universal ribosomal protein uS14 family. Part of the 30S ribosomal subunit. Contacts proteins S3 and S10.

In terms of biological role, binds 16S rRNA, required for the assembly of 30S particles and may also be responsible for determining the conformation of the 16S rRNA at the A site. The protein is Small ribosomal subunit protein uS14 of Ectopseudomonas mendocina (strain ymp) (Pseudomonas mendocina).